A 478-amino-acid chain; its full sequence is Protein WVD2-like 7 (478 aa).

Disordered stretches follow at residues 201-326 (DSAL…TGST) and 385-420 (PMPSFYNIGTRPVSHNKTEPSKVAQSRSRPATSASI). Basic and acidic residues predominate over residues 208-217 (AGSKLDEHAS). Polar residues-rich tracts occupy residues 219-232 (KPSNSMETPSSSVN) and 264-277 (GSSLSSNSKTNVDA). Basic and acidic residues predominate over residues 278–289 (KSQKELRPKKTI). Polar residues-rich tracts occupy residues 309-326 (RCKTSTTSSKLEMSTGST) and 407-420 (VAQSRSRPATSASI).

This sequence belongs to the TPX2 family. Expressed in seedlings.

Its subcellular location is the cytoplasm. The protein resides in the cytoskeleton. In terms of biological role, microtubule-associated protein (MAP) that regulates the orientation of interphase cortical microtubules. The chain is Protein WVD2-like 7 from Arabidopsis thaliana (Mouse-ear cress).